The following is a 94-amino-acid chain: Beta-diguetoxin-Dc1a (94 aa).

The N-terminal stretch at 1–17 (MKVFVVLLCLSLAAVYA) is a signal peptide. The propeptide occupies 18–38 (LEERLDKDADIMLDSPADMER). 4 disulfides stabilise this stretch: C50/C63, C57/C77, C62/C91, and C79/C89.

The protein belongs to the neurotoxin 26 (DTX) family. As to expression, expressed by the venom gland.

Its subcellular location is the secreted. Its function is as follows. Insecticidal toxin. This toxin promotes opening of insect Nav channels. The toxin binds to the S1-S2 and S3-S4 loops in the domain II voltage-sensor of insect Nav channels (i.e., receptor site 4). The American cockroach P.americana is largely resistant to the effects of this toxin due to an unusual sequence within the domain II S1-S2 loop. In vivo, paralyzes lepidopteran and dipteran larvae. Paralyzed insects ultimately die from secondary effects of starvation and dehydration. This is Beta-diguetoxin-Dc1a from Diguetia canities (Desert bush spider).